We begin with the raw amino-acid sequence, 670 residues long: Proline-rich receptor-like protein kinase PERK5 (670 aa).

The disordered stretch occupies residues 1 to 181; sequence MADSPVDSSP…SGDSDSSSGN (181 aa). Topologically, residues 1–186 are extracellular; it reads MADSPVDSSP…SSSGNHPQAN (186 aa). Residues 14-31 show a composition bias toward low complexity; it reads TSNGTPPSNGTSPSNESS. N-linked (GlcNAc...) asparagine glycosylation is found at N22 and N28. 2 stretches are compositionally biased toward pro residues: residues 32–62 and 84–109; these read PPTPPSSPPPSSISAPPPDISASFSPPPAPP and PQTPENPSPPAPEGSTPVTPPAPPQT. An N-linked (GlcNAc...) asparagine glycan is attached at N130. Residues 132-141 are compositionally biased toward low complexity; it reads TNGGNNNRDG. N151 carries N-linked (GlcNAc...) asparagine glycosylation. Residues 167–181 show a composition bias toward low complexity; that stretch reads SPPQNSGDSDSSSGN. Residues 187–207 traverse the membrane as a helical segment; that stretch reads IGLIIGVLVGAGLLLLLAVCI. At 208-670 the chain is on the cytoplasmic side; sequence CICCNRKKKK…RGSMKRNPQL (463 aa). T301 is modified (phosphothreonine). The 279-residue stretch at 312 to 590 folds into the Protein kinase domain; that stretch reads FAQSNLLGQG…VRALEGDMSM (279 aa). ATP-binding positions include 318-326 and K340; that span reads LGQGGFGYV. At Y385 the chain carries Phosphotyrosine. Catalysis depends on D436, which acts as the Proton acceptor. Phosphoserine is present on S469. Phosphothreonine occurs at positions 470 and 475. At Y483 the chain carries Phosphotyrosine. 2 disordered regions span residues 589 to 613 and 635 to 670; these read SMDDLSEGTRPGQSTYLSPGSVSSE and EYQSSEYGGTSEYGLNPSASSSEEMNRGSMKRNPQL. Positions 599–613 are enriched in polar residues; that stretch reads PGQSTYLSPGSVSSE.

The protein belongs to the protein kinase superfamily. Ser/Thr protein kinase family. Mostly expressed in flower buds.

It is found in the cell membrane. The enzyme catalyses L-seryl-[protein] + ATP = O-phospho-L-seryl-[protein] + ADP + H(+). It carries out the reaction L-threonyl-[protein] + ATP = O-phospho-L-threonyl-[protein] + ADP + H(+). The protein is Proline-rich receptor-like protein kinase PERK5 (PERK5) of Arabidopsis thaliana (Mouse-ear cress).